The following is a 318-amino-acid chain: Glutathione synthetase (318 aa).

In terms of domain architecture, ATP-grasp spans 128–313 (KLAILNFSRF…VAAMFADAVA (186 aa)). Position 154-210 (154-210 (LKEHGDIIIKPLDGMGGMGIFRLTEKDPNIGSILETLMQLDSRTIMAQRYIPEIVHG)) interacts with ATP. Residues Glu-284 and Asn-286 each coordinate Mg(2+).

This sequence belongs to the prokaryotic GSH synthase family. Mg(2+) serves as cofactor. Requires Mn(2+) as cofactor.

It catalyses the reaction gamma-L-glutamyl-L-cysteine + glycine + ATP = glutathione + ADP + phosphate + H(+). It participates in sulfur metabolism; glutathione biosynthesis; glutathione from L-cysteine and L-glutamate: step 2/2. The polypeptide is Glutathione synthetase (Neisseria meningitidis serogroup A / serotype 4A (strain DSM 15465 / Z2491)).